Consider the following 271-residue polypeptide: Peroxisomal biogenesis factor 2 (271 aa).

Topologically, residues 1 to 2 (MS) are peroxisomal matrix. Residues 3 to 29 (RVAQLDSIALDKELYGQFWSEFNAAFN) traverse the membrane as a helical segment. Topologically, residues 30–33 (TSEH) are cytoplasmic. A helical membrane pass occupies residues 34 to 60 (KEEWELALNTVVFMCATRFLPHYGSSC). Residues 61 to 77 (TYGSALSGVVFQCRKRT) are Peroxisomal matrix-facing. A helical membrane pass occupies residues 78–97 (LYVVTVLAGYVWKKITHIIF). Over 98–101 (NGPH) the chain is Cytoplasmic. Residues 102–133 (CGNQMMWLKLYKWVNLLYHGCDVTNFLRFLAA) traverse the membrane as a helical segment. Residues 134 to 175 (EGPNARAFLSPLYRAFNVHSTRLIRDGSAIASEFYSNSVFAG) are Peroxisomal matrix-facing. The chain crosses the membrane as a helical span at residues 176–197 (LEYQNRQLLWNALLELFSNTLL). Over 198–271 (TKRGLLTFVK…SGRLTASPVY (74 aa)) the chain is Cytoplasmic. 8 residues coordinate Zn(2+): Cys-222, Cys-225, Cys-237, Cys-238, Cys-243, Cys-246, Cys-256, and Cys-259. An RING-type zinc finger spans residues 222–259 (CPRCGGFPTNPYQIACCRANYCYVCVVKALEWSMCDAC).

Belongs to the pex2/pex10/pex12 family. Component of the PEX2-PEX10-PEX12 retrotranslocation channel, composed of PEX2, PEX10 and PEX12.

It localises to the peroxisome membrane. It carries out the reaction [E2 ubiquitin-conjugating enzyme]-S-ubiquitinyl-L-cysteine + [acceptor protein]-L-cysteine = [E2 ubiquitin-conjugating enzyme]-L-cysteine + [acceptor protein]-S-ubiquitinyl-L-cysteine.. Its pathway is protein modification; protein ubiquitination. Its function is as follows. E3 ubiquitin-protein ligase component of a retrotranslocation channel required for peroxisome organization by mediating export of the PEX5 receptor from peroxisomes to the cytosol, thereby promoting PEX5 recycling. The retrotranslocation channel is composed of PEX2, PEX10 and PEX12; each subunit contributing transmembrane segments that coassemble into an open channel that specifically allows the passage of PEX5 through the peroxisomal membrane. PEX2 also regulates peroxisome organization by acting as a E3 ubiquitin-protein ligase. PEX2 ubiquitinates PEX5 during its passage through the retrotranslocation channel: catalyzes monoubiquitination of PEX5 at 'Cys-6', a modification that acts as a signal for PEX5 extraction into the cytosol. The protein is Peroxisomal biogenesis factor 2 of Saccharomyces cerevisiae (strain ATCC 204508 / S288c) (Baker's yeast).